Here is a 376-residue protein sequence, read N- to C-terminus: N-acetyldiaminopimelate deacetylase (376 aa).

Residue Asp69 is part of the active site. Residue Glu128 is the Proton acceptor of the active site.

It belongs to the peptidase M20A family. N-acetyldiaminopimelate deacetylase subfamily.

It carries out the reaction N-acetyl-(2S,6S)-2,6-diaminopimelate + H2O = (2S,6S)-2,6-diaminopimelate + acetate. It participates in amino-acid biosynthesis; L-lysine biosynthesis via DAP pathway; LL-2,6-diaminopimelate from (S)-tetrahydrodipicolinate (acetylase route): step 3/3. Functionally, catalyzes the conversion of N-acetyl-diaminopimelate to diaminopimelate and acetate. The sequence is that of N-acetyldiaminopimelate deacetylase from Streptococcus pneumoniae serotype 19F (strain G54).